We begin with the raw amino-acid sequence, 150 residues long: Leukotriene C4 synthase (150 aa).

The Cytoplasmic segment spans residues 1–6 (MKDEVA). The chain crosses the membrane as a helical span at residues 7-27 (LLASVTLLGVLLQAYFSLQVI). The Lumenal segment spans residues 28-48 (SARRAFRVSPPLTTGPPEFER). Arginine 30 provides a ligand contact to glutathione. Residue arginine 31 is the Proton donor of the active site. Position 36 is a phosphoserine (serine 36). Residues 49-69 (IYRAQVNCSEYFPLFLAMLWV) form a helical membrane-spanning segment. Glutathione contacts are provided by residues 51-55 (RAQVN) and 58-59 (EY). Topologically, residues 70–73 (AGIF) are cytoplasmic. Residues 74–94 (FHEGAAALCGLVYLFARLRYF) traverse the membrane as a helical segment. Residue 93-97 (YFQGY) participates in glutathione binding. Over 95-104 (QGYARSAQQR) the chain is Lumenal. The active-site Proton acceptor is the arginine 104. A helical membrane pass occupies residues 105–124 (LAPLYASARALWLLVALAAL). At 125–150 (GLLAHFLPAELRAALLGQLRKLLLRS) the chain is on the cytoplasmic side.

Belongs to the MAPEG family. Homotrimer. Interacts with ALOX5AP and ALOX5. In terms of processing, phosphorylation at Ser-36 by RPS6KB1 inhibits the leukotriene-C4 synthase activity.

It localises to the nucleus outer membrane. The protein localises to the endoplasmic reticulum membrane. The protein resides in the nucleus membrane. The enzyme catalyses leukotriene C4 = leukotriene A4 + glutathione. It catalyses the reaction (13S,14S)-epoxy-(4Z,7Z,9E,11E,16Z,19Z)-docosahexaenoate + glutathione = (13R)-S-glutathionyl-(14S)-hydroxy-(4Z,7Z,9E,11E,16Z,19Z)-docosahexaenoate. Its pathway is lipid metabolism; leukotriene C4 biosynthesis. With respect to regulation, inhibited by MK886. Catalyzes the conjugation of leukotriene A4 with reduced glutathione (GSH) to form leukotriene C4 with high specificity. Can also catalyze the transfer of a glutathionyl group from glutathione (GSH) to 13(S),14(S)-epoxy-docosahexaenoic acid to form maresin conjugate in tissue regeneration 1 (MCTR1), a bioactive lipid mediator that possess potent anti-inflammatory and proresolving actions. The polypeptide is Leukotriene C4 synthase (LTC4S) (Bos taurus (Bovine)).